A 94-amino-acid polypeptide reads, in one-letter code: Co-chaperonin GroES (94 aa).

Belongs to the GroES chaperonin family. As to quaternary structure, heptamer of 7 subunits arranged in a ring. Interacts with the chaperonin GroEL.

The protein resides in the cytoplasm. Together with the chaperonin GroEL, plays an essential role in assisting protein folding. The GroEL-GroES system forms a nano-cage that allows encapsulation of the non-native substrate proteins and provides a physical environment optimized to promote and accelerate protein folding. GroES binds to the apical surface of the GroEL ring, thereby capping the opening of the GroEL channel. This is Co-chaperonin GroES from Bacillus mycoides (strain KBAB4) (Bacillus weihenstephanensis).